Reading from the N-terminus, the 167-residue chain is Shikimate kinase (167 aa).

8–15 (GFMGSGKT) is a binding site for ATP.

It belongs to the shikimate kinase family.

Its subcellular location is the cytoplasm. The catalysed reaction is shikimate + ATP = 3-phosphoshikimate + ADP + H(+). It functions in the pathway metabolic intermediate biosynthesis; chorismate biosynthesis; chorismate from D-erythrose 4-phosphate and phosphoenolpyruvate: step 5/7. The polypeptide is Shikimate kinase (Helicobacter hepaticus (strain ATCC 51449 / 3B1)).